Reading from the N-terminus, the 775-residue chain is Endothelin-converting enzyme-like 1 (775 aa).

At 1–61 the chain is on the cytoplasmic side; it reads MEAPYSMTAH…LPRWNRREVC (61 aa). Positions 30-52 are disordered; the sequence is GTSLPPGFPRGSGRSASGSRSGL. Low complexity predominate over residues 32-52; that stretch reads SLPPGFPRGSGRSASGSRSGL. The chain crosses the membrane as a helical; Signal-anchor for type II membrane protein span at residues 62–82; the sequence is LLSGLVFAAGLCAILAAMLAL. At 83-775 the chain is on the lumenal side; the sequence is KYLGPGAAGG…MNPVHKCSVW (693 aa). The 677-residue stretch at 99–775 folds into the Peptidase M13 domain; sequence GCPERKAFAR…MNPVHKCSVW (677 aa). Cystine bridges form between cysteine 124/cysteine 760, cysteine 132/cysteine 720, cysteine 188/cysteine 441, and cysteine 649/cysteine 772. N-linked (GlcNAc...) asparagine glycosylation is found at asparagine 255 and asparagine 322. Histidine 612 is a Zn(2+) binding site. Glutamate 613 is an active-site residue. Histidine 616 is a Zn(2+) binding site. Asparagine 656 carries an N-linked (GlcNAc...) asparagine glycan. Glutamate 672 lines the Zn(2+) pocket. Catalysis depends on aspartate 676, which acts as the Proton donor.

The protein belongs to the peptidase M13 family. Requires Zn(2+) as cofactor.

It localises to the membrane. In terms of biological role, may contribute to the degradation of peptide hormones and be involved in the inactivation of neuronal peptides. This chain is Endothelin-converting enzyme-like 1 (Ecel1), found in Mus musculus (Mouse).